Here is a 340-residue protein sequence, read N- to C-terminus: Major histocompatibility complex class I-related protein 1 (340 aa).

The N-terminal stretch at 1 to 22 is a signal peptide; sequence MGELTAFLLPLIIVLMVKHSNS. The interval 23–109 is alpha-1; that stretch reads RTHSLRYFRL…KRLQRHYNHS (87 aa). The interval 23-201 is antigen-binding cleft; it reads RTHSLRYFRL…EYGKDTLQRT (179 aa). The Extracellular segment spans residues 23 to 302; it reads RTHSLRYFRL…QESEAIPLVM (280 aa). Positions 29 and 31 each coordinate 8-(9H-purin-6-yl)-2-oxa-8-azabicyclo[3.3.1]nona-3,6-diene-4,6-dicarbaldehyde. Positions 31, 46, and 65 each coordinate 5-(2-oxoethylideneamino)-6-(D-ribitylamino)uracil. Residues Arg31, Ser46, and Lys65 each contribute to the 5-(2-oxopropylideneamino)-6-(D-ribitylamino)uracil site. The 7-hydroxy-6-methyl-8-(1-D-ribityl)lumazine site is built by Arg31, Ser46, and Lys65. The 8-(9H-purin-6-yl)-2-oxa-8-azabicyclo[3.3.1]nona-3,6-diene-4,6-dicarbaldehyde site is built by Lys65 and His80. Lys65 is a binding site for 2-amino-4-oxopteridine-6-carbaldehyde. Residue Lys65 coordinates pyridoxal. An N-linked (GlcNAc...) asparagine glycan is attached at Asn107. Residues 110–201 are alpha-2; it reads GSHTYQRMIG…EYGKDTLQRT (92 aa). Arg116 contacts 8-(9H-purin-6-yl)-2-oxa-8-azabicyclo[3.3.1]nona-3,6-diene-4,6-dicarbaldehyde. Positions 116, 174, and 175 each coordinate 5-(2-oxoethylideneamino)-6-(D-ribitylamino)uracil. 5-(2-oxopropylideneamino)-6-(D-ribitylamino)uracil contacts are provided by Arg116, Tyr174, and Gln175. Arg116, Tyr174, and Gln175 together coordinate 7-hydroxy-6-methyl-8-(1-D-ribityl)lumazine. Disulfide bonds link Cys120-Cys183 and Cys222-Cys278. Positions 202-293 are alpha-3; sequence EPPLVRVNRK…GVHVVLQVPQ (92 aa). Residues 203–282 enclose the Ig-like C1-type domain; it reads PPLVRVNRKE…SNLYSCHVEH (80 aa). Residues 294-302 form a connecting peptide region; that stretch reads ESEAIPLVM. Residues 303 to 323 form a helical membrane-spanning segment; the sequence is KAVSGSIVFVIVLAGVGVLVW. The Cytoplasmic segment spans residues 324 to 340; that stretch reads RRRPREQNGAVYLPTPD.

Belongs to the MHC class I family. As to quaternary structure, heterotrimer that consists of MR1, B2M and metabolite antigen. Major classes of metabolite ligands presented by MR1 include riboflavin-related antigens, pyrimidines and ribityl lumazines, nucleobase adducts and folate derivatives. Forms reversible covalent Schiff base complexes with microbial pyrimidine-based metabolite, which serves as a molecular switch triggering complete folding, stable association with B2M and translocation of the ternary complex from endoplasmic reticulum to the plasma membrane. Alternatively, forms non-Schiff base complexes with ribityl lumazines. On antigen-presenting cells, the ternary complex interacts with TCR on MR1-restricted T cells. Interacts with TAPBP and TAPBPL chaperones in the endoplasmic reticulum. TAPBP associated or not with MHC class I peptide loading complex binds ligand-free MR1 or MR1-B2M complex, providing for stable MR1 pools ready for metabolite antigen processing. TAPBPL interacts with MR1 in a ligand-independent way; this interaction may stabilize MR1 pool and facilitate ligand loading and dissociation. Structurally, MR1-B2M heterodimer adopts a topology similar to classical MHC class I molecules, with alpha-1 and alpha-2 domains of MR1 forming the antigen-binding cleft composed of two alpha-helices resting on a floor of 7-stranded anti-parallel beta-pleated sheet. MR1-B2M heterodimer (via alpha-helices) interacts with TCR (via CDR domains). N-glycosylated.

Its subcellular location is the cell membrane. It is found in the endoplasmic reticulum membrane. The protein resides in the golgi apparatus membrane. The protein localises to the early endosome membrane. It localises to the late endosome membrane. Antigen-presenting molecule specialized in displaying microbial pyrimidine-based metabolites to alpha-beta T cell receptors (TCR) on innate-type mucosal-associated invariant T (MAIT) cells. In complex with B2M preferentially presents riboflavin-derived metabolites to semi-invariant TCRs on MAIT cells, guiding immune surveillance of the microbial metabolome at mucosal epithelial barriers. Signature pyrimidine-based microbial antigens are generated via non-enzymatic condensation of metabolite intermediates of the riboflavin pathway with by-products arising from other metabolic pathways such as glycolysis. Typical potent antigenic metabolites are 5-(2-oxoethylideneamino)-6-D-ribitylaminouracil (5-OE-RU) and 5-(2-oxopropylideneamino)-6-D-ribitylaminouracil (5-OP-RU), products of condensation of 5-amino-6-D-ribityaminouracil (5-A-RU) with glyoxal or methylglyoxal by-products, respectively. May present microbial antigens to various MAIT cell subsets, providing for unique recognition of diverse microbes, including pathogens that do not synthesize riboflavin. Upon antigen recognition, elicits rapid innate-type MAIT cell activation to eliminate pathogenic microbes by directly killing infected cells. During T cell development, drives thymic selection and post-thymic terminal differentiation of MAIT cells in a process dependent on commensal microflora. Acts as an immune sensor of cancer cell metabolome. May present a tumor-specific or -associated metabolite essential for cancer cell survival to a pan-cancer TCR on a non-MAIT CD8-positive T cell clone, triggering T cell-mediated killing of a wide range of cancer cell types. May present tumor-enriched pyridoxal and pyridoxal 5'-phosphate antigens, enabling preferential recognition of cancer cells. Presents nucleobase carbonyl adducts generated during oxidative stress. Captures M3Ade, a nucleobase adduct composed of one adenine modified by a malondialdehyde trimer, for recognition by MR1-restricted T cell clones expressing a polyclonal TCR repertoire. The protein is Major histocompatibility complex class I-related protein 1 of Pongo abelii (Sumatran orangutan).